Here is a 387-residue protein sequence, read N- to C-terminus: Trichocyst matrix protein T2-C (387 aa).

The N-terminal stretch at 1 to 19 (MKTIILALALIVLASSTQA) is a signal peptide. A propeptide spanning residues 20–48 (DVIATIKKIDQSPFGRTLFDTIWLELQTG) is cleaved from the precursor. Residues 51-163 (LDRLLQTLTD…KVLEHQEATA (113 aa)) adopt a coiled-coil conformation. A propeptide spanning residues 184–239 (KGKATKQPAHKFTKEVASMIQKHFTTSAKKAAKFQHRKGYSKLFKAFATIASKVEQ) is cleaved from the precursor. Residues 294–333 (TALANAQSDLAALNDVIAQVEASLDTTNQRIENVSADRND) are a coiled coil.

The protein belongs to the TMP family. Post-translationally, two components are produced by post-translational processing from the precursor peptide.

It localises to the trichocyst. Its function is as follows. Structural protein that crystallize inside the trichocyst matrix. The sequence is that of Trichocyst matrix protein T2-C (T2C) from Paramecium tetraurelia.